The primary structure comprises 759 residues: 1,4-alpha-glucan branching enzyme GlgB (759 aa).

The segment at 1–21 is disordered; it reads MAKTKGLPKDTAVTPSPHLRP. Aspartate 422 (nucleophile) is an active-site residue. Glutamate 475 acts as the Proton donor in catalysis.

Belongs to the glycosyl hydrolase 13 family. GlgB subfamily. As to quaternary structure, monomer.

It catalyses the reaction Transfers a segment of a (1-&gt;4)-alpha-D-glucan chain to a primary hydroxy group in a similar glucan chain.. The protein operates within glycan biosynthesis; glycogen biosynthesis. Its function is as follows. Catalyzes the formation of the alpha-1,6-glucosidic linkages in glycogen by scission of a 1,4-alpha-linked oligosaccharide from growing alpha-1,4-glucan chains and the subsequent attachment of the oligosaccharide to the alpha-1,6 position. In Mycobacterium sp. (strain JLS), this protein is 1,4-alpha-glucan branching enzyme GlgB.